The primary structure comprises 452 residues: Gastrin/cholecystokinin type B receptor (452 aa).

Over methionine 1–threonine 57 the chain is Extracellular. 3 N-linked (GlcNAc...) asparagine glycosylation sites follow: asparagine 7, asparagine 28, and asparagine 34. A helical membrane pass occupies residues leucine 58–glycine 78. Topologically, residues leucine 79–leucine 99 are cytoplasmic. The chain crosses the membrane as a helical span at residues leucine 100–phenylalanine 120. Residues glycine 121–alanine 127 lie on the Extracellular side of the membrane. The cysteines at positions 125 and 203 are disulfide-linked. A helical membrane pass occupies residues valine 128–leucine 148. Residues glutamate 149–arginine 171 are Cytoplasmic-facing. Residues valine 172–alanine 192 traverse the membrane as a helical segment. Topologically, residues valine 193–valine 218 are extracellular. A helical transmembrane segment spans residues leucine 219–isoleucine 239. At serine 240–methionine 339 the chain is on the cytoplasmic side. Positions glutamate 256–glutamate 285 are disordered. Over residues serine 263–glutamine 273 the composition is skewed to gly residues. A helical membrane pass occupies residues leucine 340–tryptophan 360. The Extracellular segment spans residues arginine 361–proline 376. The chain crosses the membrane as a helical span at residues isoleucine 377–phenylalanine 397. Residues methionine 398–glycine 452 lie on the Cytoplasmic side of the membrane. Cysteine 413 is lipidated: S-palmitoyl cysteine.

Belongs to the G-protein coupled receptor 1 family.

It is found in the cell membrane. In terms of biological role, receptor for gastrin and cholecystokinin. The CCK-B receptors occur throughout the central nervous system where they modulate anxiety, analgesia, arousal, and neuroleptic activity. This receptor mediates its action by association with G proteins that activate a phosphatidylinositol-calcium second messenger system. This Sus scrofa (Pig) protein is Gastrin/cholecystokinin type B receptor.